We begin with the raw amino-acid sequence, 154 residues long: Putative pre-16S rRNA nuclease (154 aa).

It belongs to the YqgF nuclease family.

The protein resides in the cytoplasm. In terms of biological role, could be a nuclease involved in processing of the 5'-end of pre-16S rRNA. This Rickettsia bellii (strain OSU 85-389) protein is Putative pre-16S rRNA nuclease.